A 178-amino-acid chain; its full sequence is ATP synthase subunit b (178 aa).

Residues 11–31 (IIPEPVEIVVGLVAFLLLLFV) traverse the membrane as a helical segment.

It belongs to the ATPase B chain family. In terms of assembly, F-type ATPases have 2 components, F(1) - the catalytic core - and F(0) - the membrane proton channel. F(1) has five subunits: alpha(3), beta(3), gamma(1), delta(1), epsilon(1). F(0) has three main subunits: a(1), b(2) and c(10-14). The alpha and beta chains form an alternating ring which encloses part of the gamma chain. F(1) is attached to F(0) by a central stalk formed by the gamma and epsilon chains, while a peripheral stalk is formed by the delta and b chains.

The protein localises to the cell membrane. F(1)F(0) ATP synthase produces ATP from ADP in the presence of a proton or sodium gradient. F-type ATPases consist of two structural domains, F(1) containing the extramembraneous catalytic core and F(0) containing the membrane proton channel, linked together by a central stalk and a peripheral stalk. During catalysis, ATP synthesis in the catalytic domain of F(1) is coupled via a rotary mechanism of the central stalk subunits to proton translocation. Its function is as follows. Component of the F(0) channel, it forms part of the peripheral stalk, linking F(1) to F(0). This is ATP synthase subunit b from Saccharopolyspora erythraea (strain ATCC 11635 / DSM 40517 / JCM 4748 / NBRC 13426 / NCIMB 8594 / NRRL 2338).